The primary structure comprises 1317 residues: DNA-directed RNA polymerase subunit beta' (1317 aa).

Zn(2+)-binding residues include Cys-214, Cys-286, Cys-293, and Cys-296. The interval 1279-1317 (RAYAGTQLSQDDEEFEETYDTDEDDFDMDDDDDFGDDED) is disordered. Over residues 1288–1317 (QDDEEFEETYDTDEDDFDMDDDDDFGDDED) the composition is skewed to acidic residues.

The protein belongs to the RNA polymerase beta' chain family. RpoC2 subfamily. In terms of assembly, in cyanobacteria the RNAP catalytic core is composed of 2 alpha, 1 beta, 1 beta', 1 gamma and 1 omega subunit. When a sigma factor is associated with the core the holoenzyme is formed, which can initiate transcription. Zn(2+) is required as a cofactor.

It catalyses the reaction RNA(n) + a ribonucleoside 5'-triphosphate = RNA(n+1) + diphosphate. Functionally, DNA-dependent RNA polymerase catalyzes the transcription of DNA into RNA using the four ribonucleoside triphosphates as substrates. This Synechocystis sp. (strain ATCC 27184 / PCC 6803 / Kazusa) protein is DNA-directed RNA polymerase subunit beta'.